Consider the following 194-residue polypeptide: Large ribosomal subunit protein bL9 (194 aa).

The tract at residues 169-194 (DDINDNARPENFFDPNAEFDGGEDNA) is disordered.

It belongs to the bacterial ribosomal protein bL9 family.

Its function is as follows. Binds to the 23S rRNA. The chain is Large ribosomal subunit protein bL9 from Mesorhizobium japonicum (strain LMG 29417 / CECT 9101 / MAFF 303099) (Mesorhizobium loti (strain MAFF 303099)).